The sequence spans 414 residues: 3-oxo-tetronate kinase (414 aa).

Residues Ser-255, 355 to 358, and Gly-398 contribute to the ATP site; that span reads GGET.

It belongs to the four-carbon acid sugar kinase family.

It carries out the reaction 3-dehydro-L-erythronate + ATP = 3-dehydro-4-O-phospho-L-erythronate + ADP + H(+). The catalysed reaction is 3-dehydro-D-erythronate + ATP = 3-dehydro-4-O-phospho-D-erythronate + ADP + H(+). In terms of biological role, catalyzes the ATP-dependent phosphorylation of 3-oxo-tetronate to 3-oxo-tetronate 4-phosphate. In Actinobacillus succinogenes (strain ATCC 55618 / DSM 22257 / CCUG 43843 / 130Z), this protein is 3-oxo-tetronate kinase.